We begin with the raw amino-acid sequence, 1074 residues long: Probable arabinosyltransferase C (1074 aa).

Helical transmembrane passes span 15 to 37 (ARLV…PLLP), 214 to 236 (LLKL…ALHV), 251 to 273 (SRWW…WHFV), 415 to 437 (IIIG…ALLV), 452 to 474 (RFGY…FLIF), 516 to 538 (SVAR…AMTL), 573 to 595 (THQF…VAVT), 608 to 630 (FGAA…WYVS), 645 to 667 (FGFT…WFHF), and 684 to 706 (LLVA…SLTL).

Belongs to the emb family.

It is found in the cell membrane. Functionally, arabinosyl transferase responsible for the polymerization of arabinose into the arabinan of arabinogalactan. This Mycolicibacterium smegmatis (Mycobacterium smegmatis) protein is Probable arabinosyltransferase C (embC).